The sequence spans 474 residues: ATP synthase subunit beta (474 aa).

Residue 152–159 (GGAGVGKT) participates in ATP binding.

It belongs to the ATPase alpha/beta chains family. As to quaternary structure, F-type ATPases have 2 components, CF(1) - the catalytic core - and CF(0) - the membrane proton channel. CF(1) has five subunits: alpha(3), beta(3), gamma(1), delta(1), epsilon(1). CF(0) has three main subunits: a(1), b(2) and c(9-12). The alpha and beta chains form an alternating ring which encloses part of the gamma chain. CF(1) is attached to CF(0) by a central stalk formed by the gamma and epsilon chains, while a peripheral stalk is formed by the delta and b chains.

The protein localises to the cell inner membrane. The enzyme catalyses ATP + H2O + 4 H(+)(in) = ADP + phosphate + 5 H(+)(out). Produces ATP from ADP in the presence of a proton gradient across the membrane. The catalytic sites are hosted primarily by the beta subunits. This chain is ATP synthase subunit beta, found in Magnetococcus marinus (strain ATCC BAA-1437 / JCM 17883 / MC-1).